Reading from the N-terminus, the 269-residue chain is Undecaprenyl-diphosphatase (269 aa).

6 helical membrane passes run 43–63 (KGKV…CWEY), 82–102 (FILN…LLHG), 108–128 (LFSS…ILLV), 188–208 (ATEF…FYDV), 222–242 (MFAV…KTLI), and 249–269 (DFKG…AYYW).

Belongs to the UppP family.

Its subcellular location is the cell inner membrane. It catalyses the reaction di-trans,octa-cis-undecaprenyl diphosphate + H2O = di-trans,octa-cis-undecaprenyl phosphate + phosphate + H(+). Its function is as follows. Catalyzes the dephosphorylation of undecaprenyl diphosphate (UPP). Confers resistance to bacitracin. This Methylobacillus flagellatus (strain ATCC 51484 / DSM 6875 / VKM B-1610 / KT) protein is Undecaprenyl-diphosphatase.